We begin with the raw amino-acid sequence, 259 residues long: Global transcriptional regulator CodY (259 aa).

Residues 1-155 (MDLLTRTRKI…GATVVGMEIL (155 aa)) form a GAF domain region. A DNA-binding region (H-T-H motif) is located at residues 203–222 (ASKIADRVGITRSVIVNALR). Residue Ser215 is modified to Phosphoserine.

Belongs to the CodY family.

It localises to the cytoplasm. Functionally, DNA-binding global transcriptional regulator which is involved in the adaptive response to starvation and acts by directly or indirectly controlling the expression of numerous genes in response to nutrient availability. During rapid exponential growth, CodY is highly active and represses genes whose products allow adaptation to nutrient depletion. In Shouchella clausii (strain KSM-K16) (Alkalihalobacillus clausii), this protein is Global transcriptional regulator CodY.